The following is a 250-amino-acid chain: NADH-quinone oxidoreductase subunit C (250 aa).

Belongs to the complex I 30 kDa subunit family. As to quaternary structure, NDH-1 is composed of 14 different subunits. Subunits NuoB, C, D, E, F, and G constitute the peripheral sector of the complex.

Its subcellular location is the cell inner membrane. It catalyses the reaction a quinone + NADH + 5 H(+)(in) = a quinol + NAD(+) + 4 H(+)(out). NDH-1 shuttles electrons from NADH, via FMN and iron-sulfur (Fe-S) centers, to quinones in the respiratory chain. The immediate electron acceptor for the enzyme in this species is believed to be ubiquinone. Couples the redox reaction to proton translocation (for every two electrons transferred, four hydrogen ions are translocated across the cytoplasmic membrane), and thus conserves the redox energy in a proton gradient. In Xylella fastidiosa (strain M23), this protein is NADH-quinone oxidoreductase subunit C.